The sequence spans 303 residues: Caspase-7 (303 aa).

Acidic residues predominate over residues 1 to 21 (MADDQGCIEEQGVEDSANEDS). The tract at residues 1-30 (MADDQGCIEEQGVEDSANEDSVDAKPDRSS) is disordered. N-acetylalanine is present on A2. A propeptide spans 2 to 23 (ADDQGCIEEQGVEDSANEDSVD) (N-terminally processed). The residue at position 30 (S30) is a Phosphoserine; by PAK2. S37 is modified (phosphoserine). Residues 38 to 41 (KKKK) form an exosite region. Residues 76-87 (KNFDKVTGMGVR) form a loop L1 region. Residue H144 is part of the active site. T173 is subject to Phosphothreonine; by PAK2. The active site involves C186. The loop L2 stretch occupies residues 187–196 (RGTELDDGIQ). The propeptide occupies 199-206 (SGPINDTD). Residues 226-238 (VPGYYSWRSPGRG) are loop L3. Position 233 is a (Microbial infection) ADP-riboxanated arginine (R233). A Phosphoserine; by PAK2 modification is found at S239. Positions 274 to 288 (ESQSDDPHFHEKKQI) are loop L4.

Belongs to the peptidase C14A family. As to quaternary structure, heterotetramer that consists of two anti-parallel arranged heterodimers, each one formed by a 20 kDa (p20) and a 11 kDa (p11) subunit. Interacts with XIAP (via its second BIR domain); inhibiting CASP7 activity. Interacts with BIRC6/bruce. Interacts with ATXN3 (short isoform 1). Interacts with HSPA5. Post-translationally, cleavage by different proteases, such as granzyme B (GZMB), caspase-1 (CASP1), caspase-8 (CASP8), caspase-9 (CASP9) or caspase-10 (CASP10) generate the two active subunits. Its involvement in different programmed cell death processes is probably specified by the protease that activates CASP7. Cleaved and activated by initiator caspases (CASP8, CASP9 and/or CASP10), leading to execution phase of apoptosis. Cleavage and maturation by GZMB regulates granzyme-mediated programmed cell death. Cleaved and activated by CASP1 in response to bacterial infection. Propeptide domains can also be cleaved efficiently by CASP3. Active heterodimers between the small subunit of caspase-7 and the large subunit of CASP3, and vice versa, also occur. Also cleaved at the N-terminus at alternative sites by CAPN1, leading to its activation. Phosphorylation at Ser-30 and Ser-239 by PAK2 inhibits its activity. Phosphorylation at Ser-30 prevents cleavage and activation by initiator caspase CASP9, while phosphorylation at Ser-239 prevents thiol protease activity by preventing substrate-binding. In terms of processing, (Microbial infection) ADP-riboxanation by C.violaceum CopC blocks CASP7 processing, preventing CASP7 activation and ability to recognize and cleave substrates. Post-translationally, ubiquitinated by BIRC6; this activity is inhibited by DIABLO/SMAC. As to expression, highly expressed in lung, skeletal muscle, liver, kidney, spleen and heart, and moderately in testis. No expression in the brain.

The protein localises to the cytoplasm. It localises to the cytosol. The protein resides in the nucleus. Its subcellular location is the secreted. It is found in the extracellular space. The enzyme catalyses Strict requirement for an Asp residue at position P1 and has a preferred cleavage sequence of Asp-Glu-Val-Asp-|-.. During activation, the N-terminal disordered prodomain is removed by cleavage. Concomitantly, double cleavage gives rise to a large Caspase-7 subunit p20 and a small Caspase-7 subunit p11. The two large and two small subunits then assemble to form the active CASP7 complex. Can be cleaved and activated by different caspases, depending on the context. Cleaved and activated by initiator caspases (CASP8, CASP9 and/or CASP10), leading to execution phase of apoptosis. Inhibited by XIAP, which directly binds to the active site pocket and obstructs substrate entry. Cleavage and maturation by GZMB regulates granzyme-mediated programmed cell death. Cleavage and maturation by CASP1 regulates pyroptosis. Phosphorylation at Ser-30 and Ser-239 by PAK2 inhibits its activity. Inhibited by isatin sulfonamides. Inhibited by 2-(2,4-Dichlorophenoxy)- N-(2-mercapto-ethyl)-acetamide (DICA) and 5-Fluoro-1H-indole-2- carboxylic acid (2-mercapto-ethyl)-amide (FICA) allosteric inhibitors, which disrupt an interaction between Arg-187 and Tyr-223. Specifically inhibited by DARPin D7.18 and D7.43, which specifically bind to the precursor CASP7 and prevent its processing and activation. Inhibited by BIRC6; following inhibition of BIRC6-caspase binding by DIABLO/SMAC, BIRC6 is subjected to caspase cleavage, leading to an increase in active caspases. In terms of biological role, thiol protease involved in different programmed cell death processes, such as apoptosis, pyroptosis or granzyme-mediated programmed cell death, by proteolytically cleaving target proteins. Has a marked preference for Asp-Glu-Val-Asp (DEVD) consensus sequences, with some plasticity for alternate non-canonical sequences. Its involvement in the different programmed cell death processes is probably determined by upstream proteases that activate CASP7. Acts as an effector caspase involved in the execution phase of apoptosis: following cleavage and activation by initiator caspases (CASP8, CASP9 and/or CASP10), mediates execution of apoptosis by catalyzing cleavage of proteins, such as CLSPN, PARP1, PTGES3 and YY1. Compared to CASP3, acts as a minor executioner caspase and cleaves a limited set of target proteins. Acts as a key regulator of the inflammatory response in response to bacterial infection by catalyzing cleavage and activation of the sphingomyelin phosphodiesterase SMPD1 in the extracellular milieu, thereby promoting membrane repair. Regulates pyroptosis in intestinal epithelial cells: cleaved and activated by CASP1 in response to S.typhimurium infection, promoting its secretion to the extracellular milieu, where it catalyzes activation of SMPD1, generating ceramides that repair membranes and counteract the action of gasdermin-D (GSDMD) pores. Regulates granzyme-mediated programmed cell death in hepatocytes: cleaved and activated by granzyme B (GZMB) in response to bacterial infection, promoting its secretion to the extracellular milieu, where it catalyzes activation of SMPD1, generating ceramides that repair membranes and counteract the action of perforin (PRF1) pores. Following cleavage by CASP1 in response to inflammasome activation, catalyzes processing and inactivation of PARP1, alleviating the transcription repressor activity of PARP1. Acts as an inhibitor of type I interferon production during virus-induced apoptosis by mediating cleavage of antiviral proteins CGAS, IRF3 and MAVS, thereby preventing cytokine overproduction. Cleaves and activates sterol regulatory element binding proteins (SREBPs). Cleaves phospholipid scramblase proteins XKR4, XKR8 and XKR9. In case of infection, catalyzes cleavage of Kaposi sarcoma-associated herpesvirus protein ORF57, thereby preventing expression of viral lytic genes. Cleaves BIRC6 following inhibition of BIRC6-caspase binding by DIABLO/SMAC. Its function is as follows. Lacks enzymatic activity. The protein is Caspase-7 of Homo sapiens (Human).